Reading from the N-terminus, the 504-residue chain is ATP synthase subunit alpha (504 aa).

Residue 169 to 176 (GDRGTGKT) participates in ATP binding.

It belongs to the ATPase alpha/beta chains family. F-type ATPases have 2 components, CF(1) - the catalytic core - and CF(0) - the membrane proton channel. CF(1) has five subunits: alpha(3), beta(3), gamma(1), delta(1), epsilon(1). CF(0) has three main subunits: a(1), b(2) and c(9-12). The alpha and beta chains form an alternating ring which encloses part of the gamma chain. CF(1) is attached to CF(0) by a central stalk formed by the gamma and epsilon chains, while a peripheral stalk is formed by the delta and b chains.

It is found in the cell inner membrane. The catalysed reaction is ATP + H2O + 4 H(+)(in) = ADP + phosphate + 5 H(+)(out). In terms of biological role, produces ATP from ADP in the presence of a proton gradient across the membrane. The alpha chain is a regulatory subunit. The chain is ATP synthase subunit alpha from Leptospira biflexa serovar Patoc (strain Patoc 1 / Ames).